The primary structure comprises 422 residues: Enolase (422 aa).

Glutamine 162 contacts (2R)-2-phosphoglycerate. Residue glutamate 204 is the Proton donor of the active site. Positions 241, 284, and 311 each coordinate Mg(2+). (2R)-2-phosphoglycerate-binding residues include lysine 336, arginine 365, serine 366, and lysine 387. The active-site Proton acceptor is lysine 336.

Belongs to the enolase family. Component of the RNA degradosome, a multiprotein complex involved in RNA processing and mRNA degradation. Mg(2+) is required as a cofactor.

It localises to the cytoplasm. The protein localises to the secreted. It is found in the cell surface. It catalyses the reaction (2R)-2-phosphoglycerate = phosphoenolpyruvate + H2O. Its pathway is carbohydrate degradation; glycolysis; pyruvate from D-glyceraldehyde 3-phosphate: step 4/5. Functionally, catalyzes the reversible conversion of 2-phosphoglycerate (2-PG) into phosphoenolpyruvate (PEP). It is essential for the degradation of carbohydrates via glycolysis. This Legionella pneumophila (strain Paris) protein is Enolase.